A 213-amino-acid polypeptide reads, in one-letter code: Holliday junction resolvase RecU (213 aa).

Mg(2+)-binding residues include Thr-99, Asp-101, Glu-114, and Gln-133.

Belongs to the RecU family. It depends on Mg(2+) as a cofactor.

It is found in the cytoplasm. The enzyme catalyses Endonucleolytic cleavage at a junction such as a reciprocal single-stranded crossover between two homologous DNA duplexes (Holliday junction).. Endonuclease that resolves Holliday junction intermediates in genetic recombination. Cleaves mobile four-strand junctions by introducing symmetrical nicks in paired strands. Promotes annealing of linear ssDNA with homologous dsDNA. Required for DNA repair, homologous recombination and chromosome segregation. This chain is Holliday junction resolvase RecU, found in Lactococcus lactis subsp. lactis (strain IL1403) (Streptococcus lactis).